Consider the following 213-residue polypeptide: Uridine kinase (213 aa).

ATP is bound at residue 15-22; that stretch reads GASASGKS.

The protein belongs to the uridine kinase family.

Its subcellular location is the cytoplasm. It catalyses the reaction uridine + ATP = UMP + ADP + H(+). The catalysed reaction is cytidine + ATP = CMP + ADP + H(+). It participates in pyrimidine metabolism; CTP biosynthesis via salvage pathway; CTP from cytidine: step 1/3. It functions in the pathway pyrimidine metabolism; UMP biosynthesis via salvage pathway; UMP from uridine: step 1/1. The protein is Uridine kinase of Serratia proteamaculans (strain 568).